Here is a 447-residue protein sequence, read N- to C-terminus: Vasoactive intestinal polypeptide receptor (447 aa).

The Extracellular portion of the chain corresponds to 1–103 (MCDVVNEIEL…VDDDSFFRSV (103 aa)). 3 disulfide bridges follow: C15–C36, C27–C69, and C50–C86. N17, N22, N64, and N91 each carry an N-linked (GlcNAc...) asparagine glycan. A helical membrane pass occupies residues 104–128 (KIGYTIGHSVSLISLTTAIVILCMS). Over 129-135 (RKLHCTR) the chain is Cytoplasmic. A helical transmembrane segment spans residues 136-155 (NYIHMHLFVSFILKAIAVFV). Topologically, residues 156–178 (KDAVLYDVIQESDNCSTASVGCK) are extracellular. Residue N169 is glycosylated (N-linked (GlcNAc...) asparagine). C177 and C247 are joined by a disulfide. A helical transmembrane segment spans residues 179–202 (AVIVFFQYCIMASFFWLLVEGLYL). Over 203–216 (HALLAVSFFSERKY) the chain is Cytoplasmic. Residues 217–238 (FWWYILIGWGGPTIFIMAWSFA) form a helical membrane-spanning segment. The Extracellular segment spans residues 239–256 (KAYFNDVGCWDIIENSDL). Residues 257–280 (FWWIIKTPILASILMNFILFICII) traverse the membrane as a helical segment. Topologically, residues 281-305 (RILRQKINCPDIGRNESNQYSRLAK) are cytoplasmic. A helical membrane pass occupies residues 306-325 (STLLLIPLFGINFIIFAFIP). Over 326-337 (ENIKTELRLVFD) the chain is Extracellular. The chain crosses the membrane as a helical span at residues 338-357 (LILGSFQGFVVAVLYCFLNG). Residues 358–447 (EVQAEIKRKW…KGHEDVREVS (90 aa)) lie on the Cytoplasmic side of the membrane.

Belongs to the G-protein coupled receptor 2 family.

It localises to the cell membrane. In terms of biological role, this is a receptor for VIP. The activity of this receptor is mediated by G proteins which activate adenylyl cyclase. This Carassius auratus (Goldfish) protein is Vasoactive intestinal polypeptide receptor (vipr1).